The following is a 320-amino-acid chain: Polyketide transferase FFUJ_12241 (320 aa).

The tract at residues 58-298 is abhydrolase domain; it reads RDITCLAWDP…ILKGKGHLDW (241 aa).

This sequence belongs to the polyketide transferase af380 family.

Its function is as follows. Polyketide transferase; part of the gene cluster that mediates the biosynthesis of fujikurins A-D, secondary metabolites playing a role during rice infection. The polyketide synthase PKS19 acts with the trans-enoyl reductase FFUJ_12240 and the polyketide transferase FFUJ_12241 to produce fujikurins, however, the biosynthesis pathway has not been identified yet. This chain is Polyketide transferase FFUJ_12241, found in Gibberella fujikuroi (strain CBS 195.34 / IMI 58289 / NRRL A-6831) (Bakanae and foot rot disease fungus).